The chain runs to 316 residues: Ribosomal protein L11 methyltransferase (316 aa).

S-adenosyl-L-methionine contacts are provided by T157, G178, D200, and N243.

Belongs to the methyltransferase superfamily. PrmA family.

Its subcellular location is the cytoplasm. It carries out the reaction L-lysyl-[protein] + 3 S-adenosyl-L-methionine = N(6),N(6),N(6)-trimethyl-L-lysyl-[protein] + 3 S-adenosyl-L-homocysteine + 3 H(+). Its function is as follows. Methylates ribosomal protein L11. This chain is Ribosomal protein L11 methyltransferase, found in Streptococcus pneumoniae (strain 70585).